Reading from the N-terminus, the 359-residue chain is Carbamoyl phosphate synthase small chain (359 aa).

The interval 1–169 is CPSase; that stretch reads MTKRILVLED…TKTSYPAPGV (169 aa). The L-glutamine site is built by Ser-46, Gly-220, and Gly-222. Residues 172-358 enclose the Glutamine amidotransferase type-1 domain; the sequence is SVVLVDFGLK…IEMMEVFKQS (187 aa). Catalysis depends on Cys-247, which acts as the Nucleophile. L-glutamine contacts are provided by Met-248, Gln-251, Asn-289, Gly-291, and Tyr-292. Active-site residues include His-331 and Asp-333.

The protein belongs to the CarA family. Composed of two chains; the small (or glutamine) chain promotes the hydrolysis of glutamine to ammonia, which is used by the large (or ammonia) chain to synthesize carbamoyl phosphate. Tetramer of heterodimers (alpha,beta)4.

It catalyses the reaction hydrogencarbonate + L-glutamine + 2 ATP + H2O = carbamoyl phosphate + L-glutamate + 2 ADP + phosphate + 2 H(+). The catalysed reaction is L-glutamine + H2O = L-glutamate + NH4(+). It participates in amino-acid biosynthesis; L-arginine biosynthesis; carbamoyl phosphate from bicarbonate: step 1/1. It functions in the pathway pyrimidine metabolism; UMP biosynthesis via de novo pathway; (S)-dihydroorotate from bicarbonate: step 1/3. In terms of biological role, small subunit of the glutamine-dependent carbamoyl phosphate synthetase (CPSase). CPSase catalyzes the formation of carbamoyl phosphate from the ammonia moiety of glutamine, carbonate, and phosphate donated by ATP, constituting the first step of 2 biosynthetic pathways, one leading to arginine and/or urea and the other to pyrimidine nucleotides. The small subunit (glutamine amidotransferase) binds and cleaves glutamine to supply the large subunit with the substrate ammonia. The protein is Carbamoyl phosphate synthase small chain of Streptococcus pneumoniae (strain ATCC BAA-255 / R6).